The following is a 357-amino-acid chain: Cholinesterase 1 (357 aa).

The active-site Acyl-ester intermediate is Ser112. The cysteines at positions 166 and 179 are disulfide-linked. Catalysis depends on charge relay system residues Glu244 and His357.

The protein belongs to the type-B carboxylesterase/lipase family.

The catalysed reaction is an acylcholine + H2O = a carboxylate + choline + H(+). The sequence is that of Cholinesterase 1 (CHE1) from Branchiostoma lanceolatum (Common lancelet).